The chain runs to 466 residues: Protein tilB homolog (466 aa).

4 LRR repeats span residues 22 to 43, 45 to 66, 67 to 88, and 89 to 110; these read SLEE…DKWC, DLKI…SKLK, KLEY…EGCE, and ELAK…KTLK. In terms of domain architecture, LRRCT spans 123-161; it reads NPCAFFDHYREFVVATLPQLKWLDGKGIEPSERIKALQE. Residues 178–204 are a coiled coil; it reads LKRAKLKEEAQRKHQEEDKNEDKRSNA. Basic and acidic residues-rich tracts occupy residues 185–202 and 269–279; these read EEAQ…DKRS and EKQRKNQEKLS. 2 disordered regions span residues 185–206 and 269–288; these read EEAQ…NAGF and EKQR…VKPP. One can recognise a CS domain in the interval 301 to 396; it reads VNEPKIDFSL…GGQRAFTSVK (96 aa). The interval 418–466 is disordered; sequence VDPSKHSFPDVTNIVQGKKHTPRRRPEPKIIPSEEDPTFEDNPEVPPLI. Acidic residues predominate over residues 450-460; that stretch reads SEEDPTFEDNP.

Belongs to the tilB family. Interacts (via CS domain) with ZMYND10 (via C-terminus).

The protein resides in the cytoplasm. Its subcellular location is the cell projection. The protein localises to the cilium. Its function is as follows. May play a role in dynein arm assembly, hence essential for proper axoneme building for cilia motility. The chain is Protein tilB homolog (LRCC6) from Macaca fascicularis (Crab-eating macaque).